We begin with the raw amino-acid sequence, 189 residues long: Lutzicidin (189 aa).

The signal sequence occupies residues 1–22 (MQGFFWKTLLVVALCGTSSSLA). Residues 23-155 (HRPLSYGEAL…DEEKDRPKRV (133 aa)) constitute a propeptide that is removed on maturation. 2 cysteine pairs are disulfide-bonded: Cys-79–Cys-90 and Cys-101–Cys-118. Residues 125–148 (EEEEEDEEEQKAEVEKDEEKEDEE) are compositionally biased toward acidic residues. The tract at residues 125 to 152 (EEEEEDEEEQKAEVEKDEEKEDEEKDRP) is disordered.

Belongs to the cathelicidin family. In terms of tissue distribution, expressed by the venom gland.

Its subcellular location is the secreted. The protein localises to the target cell membrane. In terms of biological role, potent antimicrobial peptide against Gram-negative and Gram-positive bacteria. Adopts an amphipathic alpha helical conformation, that may allow to partition into the target membrane. Low hemolytic activities have been observed on mammalian cells. This Bothrops lutzi (Sertao lancehead) protein is Lutzicidin.